Reading from the N-terminus, the 112-residue chain is UPF0102 protein THEYE_A1950 (112 aa).

This sequence belongs to the UPF0102 family.

In Thermodesulfovibrio yellowstonii (strain ATCC 51303 / DSM 11347 / YP87), this protein is UPF0102 protein THEYE_A1950.